The following is a 65-amino-acid chain: Large ribosomal subunit protein bL33 (65 aa).

Residues 19–40 (TVPSSKKRSAGVSRYTTEKNRR) are disordered.

It belongs to the bacterial ribosomal protein bL33 family.

The polypeptide is Large ribosomal subunit protein bL33 (Prochlorococcus marinus (strain NATL2A)).